The following is a 130-amino-acid chain: L-ectoine synthase (130 aa).

It belongs to the ectoine synthase family.

The enzyme catalyses (2S)-4-acetamido-2-aminobutanoate = L-ectoine + H2O. Its pathway is amine and polyamine biosynthesis; ectoine biosynthesis; L-ectoine from L-aspartate 4-semialdehyde: step 3/3. Catalyzes the circularization of gamma-N-acetyl-alpha,gamma-diaminobutyric acid (ADABA) to ectoine (1,4,5,6-tetrahydro-2-methyl-4-pyrimidine carboxylic acid), which is an excellent osmoprotectant. The protein is L-ectoine synthase of Desulfatibacillum aliphaticivorans.